A 357-amino-acid polypeptide reads, in one-letter code: UPF0283 membrane protein HS_0596 (357 aa).

3 helical membrane passes run 67–87 (LMAT…QWLV), 96–116 (IAFV…GAII), and 213–233 (AVES…MFFI).

It belongs to the UPF0283 family.

The protein localises to the cell inner membrane. The protein is UPF0283 membrane protein HS_0596 of Histophilus somni (strain 129Pt) (Haemophilus somnus).